We begin with the raw amino-acid sequence, 104 residues long: uncharacterized protein (104 aa).

This is an uncharacterized protein from Pasteurella multocida (strain Pm70).